Reading from the N-terminus, the 26-residue chain is Omega-conotoxin CVIC (26 aa).

Cystine bridges form between cysteine 1-cysteine 16, cysteine 8-cysteine 20, and cysteine 15-cysteine 26. Cysteine amide is present on cysteine 26.

It belongs to the conotoxin O1 superfamily. As to expression, expressed by the venom duct.

The protein resides in the secreted. In terms of biological role, omega-conotoxins act at presynaptic membranes, they bind and block voltage-gated calcium channels (Cav). This toxin blocks N-, P- and Q-type calcium channels. This Conus catus (Cat cone) protein is Omega-conotoxin CVIC.